Consider the following 81-residue polypeptide: ATP synthase subunit c (81 aa).

2 helical membrane passes run 7-27 (AASV…PGLG) and 57-77 (LAFM…LLFA).

It belongs to the ATPase C chain family. F-type ATPases have 2 components, F(1) - the catalytic core - and F(0) - the membrane proton channel. F(1) has five subunits: alpha(3), beta(3), gamma(1), delta(1), epsilon(1). F(0) has four main subunits: a(1), b(1), b'(1) and c(10-14). The alpha and beta chains form an alternating ring which encloses part of the gamma chain. F(1) is attached to F(0) by a central stalk formed by the gamma and epsilon chains, while a peripheral stalk is formed by the delta, b and b' chains.

The protein resides in the cellular thylakoid membrane. Functionally, f(1)F(0) ATP synthase produces ATP from ADP in the presence of a proton or sodium gradient. F-type ATPases consist of two structural domains, F(1) containing the extramembraneous catalytic core and F(0) containing the membrane proton channel, linked together by a central stalk and a peripheral stalk. During catalysis, ATP synthesis in the catalytic domain of F(1) is coupled via a rotary mechanism of the central stalk subunits to proton translocation. In terms of biological role, key component of the F(0) channel; it plays a direct role in translocation across the membrane. A homomeric c-ring of between 10-14 subunits forms the central stalk rotor element with the F(1) delta and epsilon subunits. The sequence is that of ATP synthase subunit c from Synechococcus sp. (strain JA-3-3Ab) (Cyanobacteria bacterium Yellowstone A-Prime).